Here is a 349-residue protein sequence, read N- to C-terminus: 5-deoxyribose 1-phosphate isomerase (349 aa).

Substrate contacts are provided by residues 49-51 (RGA), Arg92, and Gln199. The active-site Proton donor is Asp240. 250–251 (NK) contacts substrate.

The protein belongs to the EIF-2B alpha/beta/delta subunits family. DrdI subfamily.

The enzyme catalyses 5-deoxy-alpha-D-ribose 1-phosphate = 5-deoxy-D-ribulose 1-phosphate. The protein operates within carbohydrate degradation. Its function is as follows. Catalyzes the isomerization of 5-deoxy-alpha-D-ribose 1-phosphate to 5-deoxy-D-ribulose 1-phosphate, as part of a 5-deoxyribose salvage pathway that recycles this toxic radical SAM enzyme by-product to mainstream metabolites. This Clostridium botulinum (strain Okra / Type B1) protein is 5-deoxyribose 1-phosphate isomerase.